Reading from the N-terminus, the 623-residue chain is MCVSSSIQTAILDWQCVDGIDIPVSRQFGDVYFSKDNGLLETRHVFLNGNNLTERLADLKPYQYFCVGETGFGTGLNILAVWQLWQQVRPDNHSHLHVISVEKFPLSKSDLERALRAWPELIILAEQLIEQYPFPIAGCHRLNFPDERFSLDLWLGDAHDVFPSIVKTHSVDAWFLDGFAPSCNPELWETQVLNQIVRLSDYGTTFASFSVAGILKRGLKAHGIHISRPRGFGHKREMLKAIWPFPDHESTTTVKGNQPSTQQHFAVIGAGIAGLHCAWSLAQRGHRVTLVDQSQPLSGASGNPLALLNPKLCPITQCHDHLMVLCWQYARRFYQNFEAFRLIQVNQLALKASDSLLNLAEQYPKDVLDAHSAQQSPLETQYDYLTLHYAGVISPQLFCNQVLQHPLIEFKQFKINQIIEIDGTVQLLSSEQAILESNAAIVCCARESGKLFEQYPTLKPIRGQVSWFEQHTFPFAPDQAFSYGGYCMQLHPQQLILGASFHPQRDDDEVLLEDHVHNFNLIHSVFPAYAQTLPPVEEWHGRASVRAQSPDYFPLVGQLQDHSKLFTLAGLGSKGYLFAPLNSEILVAHILGEACPVSANLLQKLNPQRFLKKVKIKKPYYSS.

The tRNA (mnm(5)s(2)U34)-methyltransferase stretch occupies residues 1 to 244 (MCVSSSIQTA…KREMLKAIWP (244 aa)). The tract at residues 268-623 (IGAGIAGLHC…VKIKKPYYSS (356 aa)) is FAD-dependent cmnm(5)s(2)U34 oxidoreductase.

The protein in the N-terminal section; belongs to the methyltransferase superfamily. tRNA (mnm(5)s(2)U34)-methyltransferase family. It in the C-terminal section; belongs to the DAO family. It depends on FAD as a cofactor.

It is found in the cytoplasm. It catalyses the reaction 5-aminomethyl-2-thiouridine(34) in tRNA + S-adenosyl-L-methionine = 5-methylaminomethyl-2-thiouridine(34) in tRNA + S-adenosyl-L-homocysteine + H(+). Functionally, catalyzes the last two steps in the biosynthesis of 5-methylaminomethyl-2-thiouridine (mnm(5)s(2)U) at the wobble position (U34) in tRNA. Catalyzes the FAD-dependent demodification of cmnm(5)s(2)U34 to nm(5)s(2)U34, followed by the transfer of a methyl group from S-adenosyl-L-methionine to nm(5)s(2)U34, to form mnm(5)s(2)U34. The chain is tRNA 5-methylaminomethyl-2-thiouridine biosynthesis bifunctional protein MnmC from Acinetobacter baylyi (strain ATCC 33305 / BD413 / ADP1).